The chain runs to 578 residues: Asparagine synthetase [glutamine-hydrolyzing] 3 (578 aa).

C2 serves as the catalytic For GATase activity. The Glutamine amidotransferase type-2 domain maps to 2–185; it reads CGILAVLGCV…PGHIYSSKQG (184 aa). L-glutamine contacts are provided by residues 50-54, 75-77, and D98; these read RLAIV and NGE. Residues 210–450 form the Asparagine synthetase domain; the sequence is VRNTFEKAVI…LPKHILYRQK (241 aa). ATP-binding positions include L231, I267, and 341–342; that span reads SG. Positions 555-572 are enriched in basic and acidic residues; sequence GEDKTEDSRPEKLQKLAE. Positions 555 to 578 are disordered; that stretch reads GEDKTEDSRPEKLQKLAEKTPAIV.

The catalysed reaction is L-aspartate + L-glutamine + ATP + H2O = L-asparagine + L-glutamate + AMP + diphosphate + H(+). The protein operates within amino-acid biosynthesis; L-asparagine biosynthesis. In terms of biological role, essential for nitrogen assimilation, distribution and remobilization within the plant via the phloem. The chain is Asparagine synthetase [glutamine-hydrolyzing] 3 (ASN3) from Arabidopsis thaliana (Mouse-ear cress).